The sequence spans 89 residues: Small ribosomal subunit protein uS15 (89 aa).

This sequence belongs to the universal ribosomal protein uS15 family. As to quaternary structure, part of the 30S ribosomal subunit. Forms a bridge to the 50S subunit in the 70S ribosome, contacting the 23S rRNA.

Its function is as follows. One of the primary rRNA binding proteins, it binds directly to 16S rRNA where it helps nucleate assembly of the platform of the 30S subunit by binding and bridging several RNA helices of the 16S rRNA. In terms of biological role, forms an intersubunit bridge (bridge B4) with the 23S rRNA of the 50S subunit in the ribosome. The chain is Small ribosomal subunit protein uS15 from Pseudarthrobacter chlorophenolicus (strain ATCC 700700 / DSM 12829 / CIP 107037 / JCM 12360 / KCTC 9906 / NCIMB 13794 / A6) (Arthrobacter chlorophenolicus).